A 317-amino-acid chain; its full sequence is Lipoyl synthase (317 aa).

Residues 1–28 are disordered; that stretch reads MDSQPQSKKAARGADKTARNPIPIIPAP. Positions 64, 69, 75, 90, 94, 97, and 304 each coordinate [4Fe-4S] cluster. The Radical SAM core domain maps to 76-293; the sequence is FGGGTATFMI…QRDGMAMGFR (218 aa).

This sequence belongs to the radical SAM superfamily. Lipoyl synthase family. The cofactor is [4Fe-4S] cluster.

The protein localises to the cytoplasm. It catalyses the reaction [[Fe-S] cluster scaffold protein carrying a second [4Fe-4S](2+) cluster] + N(6)-octanoyl-L-lysyl-[protein] + 2 oxidized [2Fe-2S]-[ferredoxin] + 2 S-adenosyl-L-methionine + 4 H(+) = [[Fe-S] cluster scaffold protein] + N(6)-[(R)-dihydrolipoyl]-L-lysyl-[protein] + 4 Fe(3+) + 2 hydrogen sulfide + 2 5'-deoxyadenosine + 2 L-methionine + 2 reduced [2Fe-2S]-[ferredoxin]. It participates in protein modification; protein lipoylation via endogenous pathway; protein N(6)-(lipoyl)lysine from octanoyl-[acyl-carrier-protein]: step 2/2. In terms of biological role, catalyzes the radical-mediated insertion of two sulfur atoms into the C-6 and C-8 positions of the octanoyl moiety bound to the lipoyl domains of lipoate-dependent enzymes, thereby converting the octanoylated domains into lipoylated derivatives. This is Lipoyl synthase from Acidithiobacillus ferrooxidans (strain ATCC 23270 / DSM 14882 / CIP 104768 / NCIMB 8455) (Ferrobacillus ferrooxidans (strain ATCC 23270)).